The chain runs to 92 residues: Acylphosphatase (92 aa).

Positions 5-92 (QVQLFVRGRV…GDFFDFRITD (88 aa)) constitute an Acylphosphatase-like domain. Residues Arg20 and Asn38 contribute to the active site.

Belongs to the acylphosphatase family.

It catalyses the reaction an acyl phosphate + H2O = a carboxylate + phosphate + H(+). In Sorangium cellulosum (strain So ce56) (Polyangium cellulosum (strain So ce56)), this protein is Acylphosphatase (acyP).